Reading from the N-terminus, the 546-residue chain is NAD(P)H-quinone oxidoreductase chain 4 (546 aa).

The next 14 helical transmembrane spans lie at 24–44 (FPWL…IPFF), 56–76 (FALS…INGF), 106–126 (ISMP…LAAW), 132–152 (PKLF…VFAV), 156–176 (LLFF…LAIW), 188–208 (FIIY…AMGF), 232–252 (ILCY…VPLH), 263–283 (TAPV…YALL), 297–317 (FAPL…LTSF), 326–346 (IAYS…SFSS), 352–372 (AMLQ…LVGA), 396–416 (FALW…SGFV), 437–457 (VVMA…LLSM), and 484–504 (VYII…PRLV).

It belongs to the complex I subunit 4 family.

Its subcellular location is the cellular thylakoid membrane. The catalysed reaction is a plastoquinone + NADH + (n+1) H(+)(in) = a plastoquinol + NAD(+) + n H(+)(out). The enzyme catalyses a plastoquinone + NADPH + (n+1) H(+)(in) = a plastoquinol + NADP(+) + n H(+)(out). In terms of biological role, NDH-1 shuttles electrons from NAD(P)H, via FMN and iron-sulfur (Fe-S) centers, to quinones in the respiratory chain. The immediate electron acceptor for the enzyme in this species is believed to be plastoquinone. Couples the redox reaction to proton translocation (for every two electrons transferred, four hydrogen ions are translocated across the cytoplasmic membrane), and thus conserves the redox energy in a proton gradient. This chain is NAD(P)H-quinone oxidoreductase chain 4, found in Prochlorococcus marinus (strain MIT 9515).